The chain runs to 168 residues: Peptide deformylase (168 aa).

2 residues coordinate Fe cation: Cys-92 and His-134. Glu-135 is a catalytic residue. Fe cation is bound at residue His-138.

Belongs to the polypeptide deformylase family. Requires Fe(2+) as cofactor.

It catalyses the reaction N-terminal N-formyl-L-methionyl-[peptide] + H2O = N-terminal L-methionyl-[peptide] + formate. Removes the formyl group from the N-terminal Met of newly synthesized proteins. Requires at least a dipeptide for an efficient rate of reaction. N-terminal L-methionine is a prerequisite for activity but the enzyme has broad specificity at other positions. In Hahella chejuensis (strain KCTC 2396), this protein is Peptide deformylase.